Here is a 247-residue protein sequence, read N- to C-terminus: Large ribosomal subunit protein uL30 (247 aa).

The protein belongs to the universal ribosomal protein uL30 family.

The polypeptide is Large ribosomal subunit protein uL30 (RPL7L1) (Sus scrofa (Pig)).